The primary structure comprises 809 residues: BTB/POZ domain-containing protein At2g30600 (809 aa).

BTB domains lie at 211 to 273 and 351 to 420; these read SDTV…QILE and SDIK…NMED. One can recognise a BACK domain in the interval 466–537; that stretch reads VVSSISSCKL…LMWCMKAEES (72 aa).

It functions in the pathway protein modification; protein ubiquitination. Functionally, may act as a substrate-specific adapter of an E3 ubiquitin-protein ligase complex (CUL3-RBX1-BTB) which mediates the ubiquitination and subsequent proteasomal degradation of target proteins. The protein is BTB/POZ domain-containing protein At2g30600 of Arabidopsis thaliana (Mouse-ear cress).